A 191-amino-acid polypeptide reads, in one-letter code: Probable chemoreceptor glutamine deamidase CheD (191 aa).

This sequence belongs to the CheD family.

The catalysed reaction is L-glutaminyl-[protein] + H2O = L-glutamyl-[protein] + NH4(+). Probably deamidates glutamine residues to glutamate on methyl-accepting chemotaxis receptors (MCPs), playing an important role in chemotaxis. This is Probable chemoreceptor glutamine deamidase CheD from Hydrogenovibrio crunogenus (strain DSM 25203 / XCL-2) (Thiomicrospira crunogena).